Here is a 33-residue protein sequence, read N- to C-terminus: Gaegurin-1 (33 aa).

A disulfide bridge connects residues Cys-27 and Cys-33.

It belongs to the frog skin active peptide (FSAP) family. Brevinin subfamily. In terms of assembly, monomer. In terms of tissue distribution, expressed by the skin glands.

It localises to the secreted. Functionally, has a non-hemolytic activity. Has a broad spectrum of activity against both Gram-positive and Gram-negative bacteria, fungi and protozoa. The sequence is that of Gaegurin-1 (GGN1) from Glandirana rugosa (Japanese wrinkled frog).